The primary structure comprises 1011 residues: Probable beta-galactosidase E (1011 aa).

The signal sequence occupies residues 1-19; it reads MKSLLKRLIALAAAYSVAA. Positions 92, 136, 137, 138, and 195 each coordinate substrate. E196 functions as the Proton donor in the catalytic mechanism. N-linked (GlcNAc...) asparagine glycosylation occurs at N202. Residue Y261 participates in substrate binding. A disulfide bridge connects residues C267 and C316. The active-site Nucleophile is the E299. Y365 provides a ligand contact to substrate. N-linked (GlcNAc...) asparagine glycosylation is found at N406, N423, N446, N455, N588, N622, N704, N745, N759, N772, N778, and N913.

It belongs to the glycosyl hydrolase 35 family.

The protein localises to the secreted. It carries out the reaction Hydrolysis of terminal non-reducing beta-D-galactose residues in beta-D-galactosides.. Cleaves beta-linked terminal galactosyl residues from gangliosides, glycoproteins, and glycosaminoglycans. This is Probable beta-galactosidase E (lacE) from Aspergillus fumigatus (strain CBS 144.89 / FGSC A1163 / CEA10) (Neosartorya fumigata).